Here is a 509-residue protein sequence, read N- to C-terminus: ATP synthase subunit beta, mitochondrial (509 aa).

A mitochondrion-targeting transit peptide spans 1-32; the sequence is MVLPRLIPRLSRSAFKVAQANNRVFNAPFRGM. Residue 189–196 coordinates ATP; that stretch reads GAGVGKTV.

F-type ATP synthases have 2 components, the catalytic core F(1) and the membrane-embedded component F(0), linked together by a central stalk and a peripheral stalk. The central stalk, also called rotor shaft, is often seen as part of F(1). The peripheral stalk is seen as part of F(0). F(0) contains the membrane channel next to the rotor. F-type ATP synthases form dimers but each monomer functions independently in ATP generation. The dimer consists of 17 different polypeptides: ATP1 (subunit alpha, 3 molecules per monomer, part of F(1)), ATP2 (subunit beta, 3 copies per monomer, part of F(1)), ATP3 (subunit gamma, part of the central stalk), ATP4 (subunit b, part of the peripheral stalk), ATP5/OSCP (subunit 5/OSCP, part of the peripheral stalk), ATP6 (subunit a, part of the peripheral stalk), ATP7 (subunit d, part of the peripheral stalk), ATP8 (subunit 8, part of the peripheral stalk), OLI1 (subunit c, part of the rotor, 10 molecules per monomer), ATP14 (subunit h, part of the peripheral stalk), ATP15 (subunit epsilon, part of the central stalk), ATP16 (subunit delta, part of the central stalk), ATP17 (subunit f, part of the peripheral stalk), ATP18 (subunit i/j, part of the peripheral stalk), ATP19 (subunit k, dimer-specific, at interface between monomers), ATP20 (subunit g, at interface between monomers), TIM11 (subunit e, at interface between monomers).

The protein resides in the mitochondrion inner membrane. The enzyme catalyses ATP + H2O + 4 H(+)(in) = ADP + phosphate + 5 H(+)(out). In terms of biological role, mitochondrial membrane ATP synthase (F(1)F(0) ATP synthase or Complex V) produces ATP from ADP in the presence of a proton gradient across the membrane which is generated by electron transport complexes of the respiratory chain. F-type ATP synthases consist of two structural domains, F(1) - containing the extramembraneous catalytic core, and F(0) - containing the membrane proton channel, linked together by a central stalk and a peripheral stalk. During catalysis, ATP synthesis in the catalytic domain of F(1) is coupled via a rotary mechanism of the central stalk subunits to proton translocation. Subunits alpha/ATP1 and beta/ATP2 form the catalytic core in F(1). Rotation of the central stalk against the surrounding alpha/ATP1(3)beta/ATP2(3) subunits leads to hydrolysis of ATP in three separate catalytic sites on the beta/ATP2 subunits. This Yarrowia lipolytica (strain CLIB 122 / E 150) (Yeast) protein is ATP synthase subunit beta, mitochondrial.